Reading from the N-terminus, the 1186-residue chain is Major DNA-binding protein (1186 aa).

A zinc finger lies at 495-508 (CCLCSLDNRHSCAH). Residues 839–840 (FW) carry the Required for filament formation motif. A required for nuclear localization region spans residues 1160 to 1186 (RRRPLACSDLFGDAPAEKRNDLTLDML).

It belongs to the herpesviridae major DNA-binding protein family. In terms of assembly, homooligomers. Forms double-helical filaments necessary for the formation of replication compartments within the host nucleus. Interacts with the origin-binding protein. Interacts with the helicase primase complex; this interaction stimulates primer synthesis activity of the helicase-primase complex. Interacts with the DNA polymerase. Interacts with the alkaline exonuclease; this interaction increases its nuclease processivity.

It is found in the host nucleus. In terms of biological role, plays several crucial roles in viral infection. Participates in the opening of the viral DNA origin to initiate replication by interacting with the origin-binding protein. May disrupt loops, hairpins and other secondary structures present on ssDNA to reduce and eliminate pausing of viral DNA polymerase at specific sites during elongation. Promotes viral DNA recombination by performing strand-transfer, characterized by the ability to transfer a DNA strand from a linear duplex to a complementary single-stranded DNA circle. Can also catalyze the renaturation of complementary single strands. Additionally, reorganizes the host cell nucleus, leading to the formation of prereplicative sites and replication compartments. This process is driven by the protein which can form double-helical filaments in the absence of DNA. This Bovine herpesvirus 2 (strain BMV) (BoHV-2) protein is Major DNA-binding protein.